The following is a 159-amino-acid chain: Kojic acid related protein 6 (159 aa).

In terms of biological role, negatively regulates mycelium growth and conidial formation and is required for stress tolerance. Plays a role in kojic acid synthesis in coordination with kojA, kojR and kojT where it acts upstream of kojA. This is Kojic acid related protein 6 from Aspergillus oryzae (strain ATCC 42149 / RIB 40) (Yellow koji mold).